The sequence spans 388 residues: Succinate--CoA ligase [ADP-forming] subunit beta (388 aa).

The ATP-grasp domain maps to 9 to 244 (KEILRQAGVP…LDEEDPAEVE (236 aa)). Residues Lys46, 53–55 (GRG), Glu99, Ala102, and Glu107 each bind ATP. Mg(2+) is bound by residues Asn199 and Asp213. Substrate is bound by residues Asn264 and 321 to 323 (GIM).

The protein belongs to the succinate/malate CoA ligase beta subunit family. In terms of assembly, heterotetramer of two alpha and two beta subunits. Requires Mg(2+) as cofactor.

It carries out the reaction succinate + ATP + CoA = succinyl-CoA + ADP + phosphate. The catalysed reaction is GTP + succinate + CoA = succinyl-CoA + GDP + phosphate. The protein operates within carbohydrate metabolism; tricarboxylic acid cycle; succinate from succinyl-CoA (ligase route): step 1/1. Functionally, succinyl-CoA synthetase functions in the citric acid cycle (TCA), coupling the hydrolysis of succinyl-CoA to the synthesis of either ATP or GTP and thus represents the only step of substrate-level phosphorylation in the TCA. The beta subunit provides nucleotide specificity of the enzyme and binds the substrate succinate, while the binding sites for coenzyme A and phosphate are found in the alpha subunit. In Albidiferax ferrireducens (strain ATCC BAA-621 / DSM 15236 / T118) (Rhodoferax ferrireducens), this protein is Succinate--CoA ligase [ADP-forming] subunit beta.